Reading from the N-terminus, the 424-residue chain is DNA primase DnaG (424 aa).

Positions 171 to 245 (DDIIVVEGRA…DVDFVARAPP (75 aa)) constitute a Toprim domain. The Mg(2+) site is built by E177, D219, and D221.

It belongs to the archaeal DnaG primase family. As to quaternary structure, forms a ternary complex with MCM helicase and DNA. Mg(2+) is required as a cofactor.

The catalysed reaction is ssDNA + n NTP = ssDNA/pppN(pN)n-1 hybrid + (n-1) diphosphate.. Its function is as follows. RNA polymerase that catalyzes the synthesis of short RNA molecules used as primers for DNA polymerase during DNA replication. The polypeptide is DNA primase DnaG (Methanocaldococcus jannaschii (strain ATCC 43067 / DSM 2661 / JAL-1 / JCM 10045 / NBRC 100440) (Methanococcus jannaschii)).